The chain runs to 286 residues: MCTMPLMKLKKMMRRTAFLLSVLIGCSMLGSDRSDKAPHWELVWSDEFDYSGLPDPEKWDYDVGGHGWGNQELQYYTRARIENARVGGGVLIIEARHEPYEGREYTSARLVTRGKASWTYGRFEIRARLPSGRGTWPAIWMLPDRQTYGSAYWPDNGEIDIMEHVGFNPDVVHGTVHTKAYNHLLGTQRGGSIRVPTARTDFHVYAIEWTPEEIRWFVDDSLYYRFPNERLTDPEADWRHWPFDQPFHLIMNIAVGGAWGGQQGVDPEAFPAQLVVDYVRVYRWVE.

The signal sequence occupies residues 1–30; it reads MCTMPLMKLKKMMRRTAFLLSVLIGCSMLG. In terms of domain architecture, GH16 spans 48–286; the sequence is FDYSGLPDPE…DYVRVYRWVE (239 aa). The active-site Nucleophile is the glutamate 158. Glutamate 163 (proton donor) is an active-site residue.

It belongs to the glycosyl hydrolase 16 family.

The enzyme catalyses Hydrolysis of (1-&gt;4)-beta-D-glucosidic linkages in beta-D-glucans containing (1-&gt;3)- and (1-&gt;4)-bonds.. Shows activity on lichenan, beta-glucan and laminarin but not on CMC cellulose or xylan. This Rhodothermus marinus (Rhodothermus obamensis) protein is Beta-glucanase (bglA).